Reading from the N-terminus, the 396-residue chain is Protein TOC75-4, chloroplastic (396 aa).

Residues 1 to 23 (MEAVKEAVRKIKSLVIPHADEKD) lie on the Chloroplast intermembrane side of the membrane. A beta stranded transmembrane segment spans residues 24–32 (NGIVFEIKL). Residues 33–87 (NETDQRVEKWGLDPSLDFFEVTGNCNLGRPNSEGSNQSLMGSVTIRNIFNPKLDD) lie on the Cytoplasmic side of the membrane. Residues 88–96 (LLSKIEYVR) traverse the membrane as a beta stranded segment. The Chloroplast intermembrane segment spans residues 97 to 140 (FLEAVKKPRNRTFKTSFFNSRKLSPVFTGGPGYEDLVPPMFVGR). The chain crosses the membrane as a beta stranded span at residues 141-148 (DCLKATIT). The Cytoplasmic segment spans residues 149–156 (ENLTRQRE). Residues 157-164 (LTYGVMFE) form a beta stranded membrane-spanning segment. Over 165-271 (EIITRDENRR…VEEGSDKPQP (107 aa)) the chain is Chloroplast intermembrane. The beta stranded transmembrane segment at 272–280 (PVLVLHGRY) threads the bilayer. Over 281–292 (GGCIGDLPSYDV) the chain is Cytoplasmic. The beta stranded transmembrane segment at 293–301 (FALGGPNSV) threads the bilayer. Topologically, residues 302–363 (RGYSMGELGA…LYRKMGHGSS (62 aa)) are chloroplast intermembrane. Residues 364–370 (YGLGVKL) form a beta stranded membrane-spanning segment. The Cytoplasmic segment spans residues 371 to 384 (GMVRAEYTVRHNRG). Residues 385 to 392 (TGALFLRF) traverse the membrane as a beta stranded segment. At 393 to 396 (GERY) the chain is on the chloroplast intermembrane side.

The protein belongs to the TOC75 family. Part of the TOC core complex that includes a protein for the specific recognition of transit peptides surrounded by a ring composed of four proteins forming translocation channels, and four to five GTP-binding proteins providing energy. This core complex can interact with components of the TIC complex to form a larger import complex. Chloroplastic protein precursors also interacts with these complexes. Expressed ubiquitously at low levels.

The protein localises to the plastid. Its subcellular location is the chloroplast outer membrane. Mediates the insertion of proteins targeted to the outer membrane of chloroplasts. Required for the import of protein precursors into chloroplasts. Forms the voltage-dependent preprotein translocation channels (hydrophilic beta barrel) of the TOC complex in the chloroplastic outer membrane. Required for etioplast formation and/or etioplast-chloroplast transition during deetiolation. This chain is Protein TOC75-4, chloroplastic (TOC75-4), found in Arabidopsis thaliana (Mouse-ear cress).